The primary structure comprises 92 residues: Muconolactone Delta-isomerase (92 aa).

Belongs to the muconolactone Delta-isomerase family. Homodecamer.

It carries out the reaction (S)-muconolactone = (4,5-dihydro-5-oxofuran-2-yl)-acetate. The protein operates within aromatic compound metabolism; beta-ketoadipate pathway; 5-oxo-4,5-dihydro-2-furylacetate from catechol: step 3/3. The protein is Muconolactone Delta-isomerase (catC) of Cupriavidus pinatubonensis (strain JMP 134 / LMG 1197) (Cupriavidus necator (strain JMP 134)).